Consider the following 415-residue polypeptide: Serine hydroxymethyltransferase (415 aa).

(6S)-5,6,7,8-tetrahydrofolate-binding positions include Leu-121 and 125 to 127 (GHL). Lys-230 carries the post-translational modification N6-(pyridoxal phosphate)lysine. 355-357 (SPF) lines the (6S)-5,6,7,8-tetrahydrofolate pocket.

It belongs to the SHMT family. As to quaternary structure, homodimer. Pyridoxal 5'-phosphate serves as cofactor.

It localises to the cytoplasm. It catalyses the reaction (6R)-5,10-methylene-5,6,7,8-tetrahydrofolate + glycine + H2O = (6S)-5,6,7,8-tetrahydrofolate + L-serine. It functions in the pathway one-carbon metabolism; tetrahydrofolate interconversion. Its pathway is amino-acid biosynthesis; glycine biosynthesis; glycine from L-serine: step 1/1. Its function is as follows. Catalyzes the reversible interconversion of serine and glycine with tetrahydrofolate (THF) serving as the one-carbon carrier. This reaction serves as the major source of one-carbon groups required for the biosynthesis of purines, thymidylate, methionine, and other important biomolecules. Also exhibits THF-independent aldolase activity toward beta-hydroxyamino acids, producing glycine and aldehydes, via a retro-aldol mechanism. The protein is Serine hydroxymethyltransferase of Lactococcus lactis subsp. cremoris (strain SK11).